Reading from the N-terminus, the 275-residue chain is Phosphite import ATP-binding protein PxtA (275 aa).

In terms of domain architecture, ABC transporter spans 11 to 252 (LRVDRLSVVY…QLERIYAGRS (242 aa)). 44–51 (GLSGAGKS) is an ATP binding site. The segment at 251 to 275 (RSTTQPANAPAEPPVMLEPSLEMSR) is disordered.

It belongs to the ABC transporter superfamily. Phosphonates importer (TC 3.A.1.9.1) family. In terms of assembly, the complex is composed of two ATP-binding proteins (PtxA), two transmembrane proteins (PtxC) and a solute-binding protein (PtxB).

It localises to the cell inner membrane. It catalyses the reaction phosphite(out) + ATP + H2O = phosphite(in) + ADP + phosphate + H(+). Functionally, part of the ABC transporter complex PtxABC involved in phosphite import. Responsible for energy coupling to the transport system. This Stutzerimonas stutzeri (Pseudomonas stutzeri) protein is Phosphite import ATP-binding protein PxtA (ptxA).